Reading from the N-terminus, the 185-residue chain is Elongation factor P (185 aa).

This sequence belongs to the elongation factor P family.

It is found in the cytoplasm. Its pathway is protein biosynthesis; polypeptide chain elongation. Its function is as follows. Involved in peptide bond synthesis. Stimulates efficient translation and peptide-bond synthesis on native or reconstituted 70S ribosomes in vitro. Probably functions indirectly by altering the affinity of the ribosome for aminoacyl-tRNA, thus increasing their reactivity as acceptors for peptidyl transferase. The polypeptide is Elongation factor P (Desulforudis audaxviator (strain MP104C)).